Here is a 227-residue protein sequence, read N- to C-terminus: Cytochrome c oxidase subunit 2 (227 aa).

Residues 1–14 (MAYPFQLGLQDATS) lie on the Mitochondrial intermembrane side of the membrane. A helical transmembrane segment spans residues 15-45 (PIMEELANFHDHTLMIVFLISSLVLYIISSM). Residues 46–59 (LTTKLTHTSTMDAQ) lie on the Mitochondrial matrix side of the membrane. Residues 60–87 (EVETIWTILPAVILILIALPSLRILYMM) form a helical membrane-spanning segment. The Mitochondrial intermembrane segment spans residues 88–227 (DEINNPALTV…HFENWSASMI (140 aa)). Cu cation contacts are provided by His161, Cys196, Glu198, Cys200, His204, and Met207. Glu198 is a binding site for Mg(2+).

This sequence belongs to the cytochrome c oxidase subunit 2 family. In terms of assembly, component of the cytochrome c oxidase (complex IV, CIV), a multisubunit enzyme composed of 14 subunits. The complex is composed of a catalytic core of 3 subunits MT-CO1, MT-CO2 and MT-CO3, encoded in the mitochondrial DNA, and 11 supernumerary subunits COX4I, COX5A, COX5B, COX6A, COX6B, COX6C, COX7A, COX7B, COX7C, COX8 and NDUFA4, which are encoded in the nuclear genome. The complex exists as a monomer or a dimer and forms supercomplexes (SCs) in the inner mitochondrial membrane with NADH-ubiquinone oxidoreductase (complex I, CI) and ubiquinol-cytochrome c oxidoreductase (cytochrome b-c1 complex, complex III, CIII), resulting in different assemblies (supercomplex SCI(1)III(2)IV(1) and megacomplex MCI(2)III(2)IV(2)). Found in a complex with TMEM177, COA6, COX18, COX20, SCO1 and SCO2. Interacts with TMEM177 in a COX20-dependent manner. Interacts with COX20. Interacts with COX16. Requires Cu cation as cofactor.

The protein resides in the mitochondrion inner membrane. The enzyme catalyses 4 Fe(II)-[cytochrome c] + O2 + 8 H(+)(in) = 4 Fe(III)-[cytochrome c] + 2 H2O + 4 H(+)(out). Component of the cytochrome c oxidase, the last enzyme in the mitochondrial electron transport chain which drives oxidative phosphorylation. The respiratory chain contains 3 multisubunit complexes succinate dehydrogenase (complex II, CII), ubiquinol-cytochrome c oxidoreductase (cytochrome b-c1 complex, complex III, CIII) and cytochrome c oxidase (complex IV, CIV), that cooperate to transfer electrons derived from NADH and succinate to molecular oxygen, creating an electrochemical gradient over the inner membrane that drives transmembrane transport and the ATP synthase. Cytochrome c oxidase is the component of the respiratory chain that catalyzes the reduction of oxygen to water. Electrons originating from reduced cytochrome c in the intermembrane space (IMS) are transferred via the dinuclear copper A center (CU(A)) of subunit 2 and heme A of subunit 1 to the active site in subunit 1, a binuclear center (BNC) formed by heme A3 and copper B (CU(B)). The BNC reduces molecular oxygen to 2 water molecules using 4 electrons from cytochrome c in the IMS and 4 protons from the mitochondrial matrix. In Malacomys longipes (Big-eared swamp rat), this protein is Cytochrome c oxidase subunit 2 (MT-CO2).